Here is a 634-residue protein sequence, read N- to C-terminus: Kelch-like protein 22 (634 aa).

The residue at position 2 (alanine 2) is an N-acetylalanine. A BTB domain is found at 50-117 (FDVVLVVEGR…IYTSELELSL (68 aa)). Kelch repeat units lie at residues 299–349 (CVVG…VLNN), 350–399 (FVYL…VVGR), 400–446 (YIYA…TLEG), 448–493 (MYVT…TLLD), 494–544 (KLYV…VLDT), and 545–593 (RIYV…VLTL). The residue at position 463 (threonine 463) is a Phosphothreonine. Tyrosine 466 is modified (phosphotyrosine). The disordered stretch occupies residues 600-634 (EPPRGTPDRSQADPDFASEVMSVSDWEEFDNSSED). Threonine 605 is modified (phosphothreonine). A compositionally biased stretch (acidic residues) spans 624-634 (DWEEFDNSSED).

In terms of assembly, component of the BCR(KLHL22) E3 ubiquitin ligase complex, at least composed of CUL3, KLHL22 and RBX1. Interacts with PLK1. Interacts with DEPDC5 (via DEP domain); the interaction depends on amino acid availability. Interacts with YWHAE; required for the nuclear localization of KLHL22 upon amino acid starvation.

It is found in the cytoplasm. The protein localises to the cytosol. It localises to the cytoskeleton. The protein resides in the microtubule organizing center. Its subcellular location is the centrosome. It is found in the spindle. The protein localises to the nucleus. It localises to the lysosome. It participates in protein modification; protein ubiquitination. Functionally, substrate-specific adapter of a BCR (BTB-CUL3-RBX1) E3 ubiquitin ligase complex required for chromosome alignment and localization of PLK1 at kinetochores. The BCR(KLHL22) ubiquitin ligase complex mediates monoubiquitination of PLK1, leading to PLK1 dissociation from phosphoreceptor proteins and subsequent removal from kinetochores, allowing silencing of the spindle assembly checkpoint (SAC) and chromosome segregation. Monoubiquitination of PLK1 does not lead to PLK1 degradation. The BCR(KLHL22) ubiquitin ligase complex is also responsible for the amino acid-stimulated 'Lys-48' polyubiquitination and proteasomal degradation of DEPDC5. Through the degradation of DEPDC5, releases the GATOR1 complex-mediated inhibition of the TORC1 pathway. It is therefore an amino acid-dependent activator within the amino acid-sensing branch of the TORC1 pathway, indirectly regulating different cellular processes including cell growth and autophagy. This chain is Kelch-like protein 22 (KLHL22), found in Ailuropoda melanoleuca (Giant panda).